We begin with the raw amino-acid sequence, 277 residues long: Diaminopimelate epimerase (277 aa).

Asparagine 13, glutamine 46, and asparagine 66 together coordinate substrate. Residue cysteine 75 is the Proton donor of the active site. Substrate contacts are provided by residues 76 to 77, asparagine 159, asparagine 192, and 210 to 211; these read GN and ER. The Proton acceptor role is filled by cysteine 219. 220–221 is a binding site for substrate; the sequence is GT.

The protein belongs to the diaminopimelate epimerase family. Homodimer.

The protein localises to the cytoplasm. It catalyses the reaction (2S,6S)-2,6-diaminopimelate = meso-2,6-diaminopimelate. The protein operates within amino-acid biosynthesis; L-lysine biosynthesis via DAP pathway; DL-2,6-diaminopimelate from LL-2,6-diaminopimelate: step 1/1. Functionally, catalyzes the stereoinversion of LL-2,6-diaminopimelate (L,L-DAP) to meso-diaminopimelate (meso-DAP), a precursor of L-lysine and an essential component of the bacterial peptidoglycan. The sequence is that of Diaminopimelate epimerase from Aromatoleum aromaticum (strain DSM 19018 / LMG 30748 / EbN1) (Azoarcus sp. (strain EbN1)).